A 254-amino-acid polypeptide reads, in one-letter code: tRNA (guanine-N(7)-)-methyltransferase (254 aa).

The tract at residues 1 to 34 is disordered; the sequence is MNTNTPAHPPEGAPLSEATQAALASAEHAPDSPG. S-adenosyl-L-methionine-binding residues include Glu-87, Glu-112, Asp-139, and Asp-162. Asp-162 is a catalytic residue. Residues Lys-166, Asp-198, and 233–236 each bind substrate; that span reads TKFE.

It belongs to the class I-like SAM-binding methyltransferase superfamily. TrmB family.

The enzyme catalyses guanosine(46) in tRNA + S-adenosyl-L-methionine = N(7)-methylguanosine(46) in tRNA + S-adenosyl-L-homocysteine. The protein operates within tRNA modification; N(7)-methylguanine-tRNA biosynthesis. Its function is as follows. Catalyzes the formation of N(7)-methylguanine at position 46 (m7G46) in tRNA. This chain is tRNA (guanine-N(7)-)-methyltransferase, found in Bordetella pertussis (strain Tohama I / ATCC BAA-589 / NCTC 13251).